Reading from the N-terminus, the 173-residue chain is C-phycocyanin beta subunit (173 aa).

N73 carries the post-translational modification N4-methylasparagine. (2R,3E)-phycocyanobilin-binding residues include C83 and C154.

This sequence belongs to the phycobiliprotein family. As to quaternary structure, heterodimer of an alpha and a beta subunit. Heterodimers further assemble into trimers and the trimers into hexamers. Post-translationally, contains two covalently linked bilin chromophores.

The protein resides in the cellular thylakoid membrane. In terms of biological role, light-harvesting photosynthetic bile pigment-protein from the phycobiliprotein complex (phycobilisome, PBS). Phycocyanin is the major phycobiliprotein in the PBS rod. The polypeptide is C-phycocyanin beta subunit (cpcB) (Mastigocladus laminosus (Fischerella sp.)).